Reading from the N-terminus, the 940-residue chain is Isoleucine--tRNA ligase (940 aa).

The 'HIGH' region signature appears at 58-68; it reads PYANGDIHIGH. An L-isoleucyl-5'-AMP-binding site is contributed by Glu564. Positions 605-609 match the 'KMSKS' region motif; the sequence is KMSKS. Lys608 is a binding site for ATP. Zn(2+) is bound by residues Cys903, Cys906, Cys923, and Cys926.

Belongs to the class-I aminoacyl-tRNA synthetase family. IleS type 1 subfamily. In terms of assembly, monomer. The cofactor is Zn(2+).

It localises to the cytoplasm. The catalysed reaction is tRNA(Ile) + L-isoleucine + ATP = L-isoleucyl-tRNA(Ile) + AMP + diphosphate. Catalyzes the attachment of isoleucine to tRNA(Ile). As IleRS can inadvertently accommodate and process structurally similar amino acids such as valine, to avoid such errors it has two additional distinct tRNA(Ile)-dependent editing activities. One activity is designated as 'pretransfer' editing and involves the hydrolysis of activated Val-AMP. The other activity is designated 'posttransfer' editing and involves deacylation of mischarged Val-tRNA(Ile). The polypeptide is Isoleucine--tRNA ligase (Shewanella halifaxensis (strain HAW-EB4)).